The chain runs to 420 residues: Reticulon-4 receptor-like 2 (420 aa).

Residues 1-30 form the signal peptide; sequence MLPGLRRLLQGPASACLLLTLLALPSVTPS. Intrachain disulfides connect Cys31-Cys37 and Cys35-Cys46. Residues 31–60 form the LRRNT domain; sequence CPMLCTCYSSPPTVSCQANNFSSVPLSLPP. Asn50 carries an N-linked (GlcNAc...) asparagine glycan. 8 LRR repeats span residues 61 to 82, 83 to 104, 107 to 129, 132 to 153, 156 to 177, 180 to 201, 204 to 225, and 228 to 249; these read STQRLFLQNNLIRSLRPGTFGP, NLLTLWLFSNNLSTIHPGTFRH, ALEELDLGDNRHLRSLEPDTFQG, RLQSLHLYRCQLSSLPGNIFRG, SLQYLYLQENSLLHLQDDLFAD, NLSHLFLHGNRLRLLTEHVFRG, SLDRLLLHGNRLQGVHRAAFHG, and RLTILYLFNNSLASLPGEALAD. Asn93 is a glycosylation site (N-linked (GlcNAc...) asparagine). Asn236 is a glycosylation site (N-linked (GlcNAc...) asparagine). The 52-residue stretch at 261–312 folds into the LRRCT domain; it reads NPWACDCRARPLWAWFQRARVSSSDVTCATPPERQGRDLRALRDSDFQACPP. 2 cysteine pairs are disulfide-bonded: Cys265-Cys288 and Cys267-Cys310. The segment at 286–399 is disordered; it reads VTCATPPERQ…CQAPADSRGP (114 aa). Residues 294–306 are compositionally biased toward basic and acidic residues; it reads RQGRDLRALRDSD. The segment at 315–327 is important for interaction with MAG; sequence PTRPGSRARGNSS. The span at 351–360 shows a compositional bias: basic and acidic residues; that stretch reads LPAEDSRGRQ. The GPI-anchor amidated glycine moiety is linked to residue Gly398. The propeptide at 399–420 is removed in mature form; sequence PALSAGLRTPLLCLLPLALHHL.

The protein belongs to the Nogo receptor family. Interaction with MAG is controversial, and may be indirect. Interacts with MAG. Does not interact with OMG and RTN4. In terms of processing, undergoes zinc metalloproteinase-mediated ectodomain shedding in neuroblastoma cells; is released both as a full-length ectodomain and an N-terminal fragment containing the leucine-rich repeat (LRR) region of the protein. Post-translationally, N-glycosylated. In terms of tissue distribution, detected in brain. Detected in hippocampus neurons (at protein level).

It localises to the cell membrane. The protein resides in the membrane raft. Its subcellular location is the cell projection. It is found in the dendrite. The protein localises to the axon. It localises to the perikaryon. In terms of biological role, cell surface receptor that plays a functionally redundant role in the inhibition of neurite outgrowth mediated by MAG. Plays a functionally redundant role in postnatal brain development. Contributes to normal axon migration across the brain midline and normal formation of the corpus callosum. Does not seem to play a significant role in regulating axon regeneration in the adult central nervous system. Protects motoneurons against apoptosis; protection against apoptosis is probably mediated by MAG. Like other family members, plays a role in restricting the number dendritic spines and the number of synapses that are formed during brain development. Signaling mediates activation of Rho and downstream reorganization of the actin cytoskeleton. The protein is Reticulon-4 receptor-like 2 of Mus musculus (Mouse).